A 713-amino-acid chain; its full sequence is Nucleolin (713 aa).

The segment at 1 to 309 is disordered; sequence MVKLAKAGKT…QKIEGSEPTT (309 aa). N6-acetyllysine is present on residues K9, K15, and K16. Acidic residues predominate over residues 24–46; the sequence is VEEDSEDEEMSEDEDDSSGEEEV. Phosphoserine is present on residues S28, S34, S40, and S41. The segment covering 56-111 has biased composition (low complexity); that stretch reads ATTTPAKKVVVSQTKKAAVPTPAKKAAVTPGKKAAATPAKKAVTPAKVVPTPGKKG. Repeat unit 1 spans residues 58-65; the sequence is TTPAKKVV. Residues 58–135 form an 8 X 8 AA tandem repeats of X-T-P-X-K-K-X-X region; it reads TTPAKKVVVS…GAVTPAKGAK (78 aa). S67 is subject to Phosphoserine. T69, T76, T84, and T92 each carry phosphothreonine. 3 tandem repeats follow at residues 75–82, 83–90, and 91–98. K96 is modified (N6-acetyllysine). T99 carries the post-translational modification Phosphothreonine. A 5; truncated repeat occupies 99–104; sequence TPAKVV. At K102 the chain carries N6-acetyllysine. The stretch at 105–112 is repeat 6; the sequence is PTPGKKGA. The residue at position 106 (T106) is a Phosphothreonine. N6-acetyllysine occurs at positions 109 and 116. A run of 2 repeats spans residues 120–127 and 128–135. A Phosphothreonine modification is found at T121. The residue at position 124 (K124) is an N6-acetyllysine. S145 and S157 each carry phosphoserine. The segment covering 145–168 has biased composition (acidic residues); the sequence is SDEDEDEEDEDDSDEDEDEEDEFE. Positions 169–186 are enriched in low complexity; it reads PPVVKGVKPAKAAPAAPA. Phosphoserine is present on residues S187 and S213. A compositionally biased stretch (acidic residues) spans 187–218; sequence SEDEDEEDDDDEDDDDDDEEEEEEDDSEEEVM. T221 carries the phosphothreonine modification. Residues 242 to 275 are compositionally biased toward acidic residues; the sequence is EEEEDDEDDEDEEEDEDEEDEEDDEDEDEEEEEE. A compositionally biased stretch (basic and acidic residues) spans 288–304; it reads MTKQKEAPEAKKQKIEG. Residue K301 forms a Glycyl lysine isopeptide (Lys-Gly) (interchain with G-Cter in SUMO1); alternate linkage. A Glycyl lysine isopeptide (Lys-Gly) (interchain with G-Cter in SUMO2); alternate cross-link involves residue K301. Phosphoserine is present on S305. RRM domains lie at 311-387 and 397-470; these read FNLF…KPKG and RTLL…YTGE. Residue K322 is modified to N6-acetyllysine. K328 is covalently cross-linked (Glycyl lysine isopeptide (Lys-Gly) (interchain with G-Cter in SUMO1); alternate). K328 participates in a covalent cross-link: Glycyl lysine isopeptide (Lys-Gly) (interchain with G-Cter in SUMO2); alternate. K352 bears the N6-acetyllysine mark. S360 bears the Phosphoserine mark. The residue at position 371 (T371) is a Phosphothreonine. Residue K374 forms a Glycyl lysine isopeptide (Lys-Gly) (interchain with G-Cter in SUMO2) linkage. K381 participates in a covalent cross-link: Glycyl lysine isopeptide (Lys-Gly) (interchain with G-Cter in SUMO2); alternate. The residue at position 381 (K381) is an N6-acetyllysine; alternate. Residue K402 is modified to N6-acetyllysine. S405 bears the Phosphoserine mark. T409 carries the phosphothreonine modification. K448 is subject to N6-acetyllysine. Phosphoserine is present on residues S462 and S464. An N6-acetyllysine mark is found at K471 and K480. The RRM 3 domain occupies 489–563; the sequence is KTLVLSNLSY…RTIRLELQGP (75 aa). A Glycyl lysine isopeptide (Lys-Gly) (interchain with G-Cter in SUMO2); alternate cross-link involves residue K516. K516 carries the post-translational modification N6-acetyllysine; alternate. K524 bears the N6-acetyllysine mark. S566 carries the phosphoserine modification. Residue K575 is modified to N6-acetyllysine. Positions 575–650 constitute an RRM 4 domain; sequence KTLFVKGLSE…NKVTLDWAKP (76 aa). K580 is covalently cross-linked (Glycyl lysine isopeptide (Lys-Gly) (interchain with G-Cter in SUMO2); alternate). K580 carries the N6-acetyllysine; alternate modification. At S583 the chain carries Phosphoserine. K592 participates in a covalent cross-link: Glycyl lysine isopeptide (Lys-Gly) (interchain with G-Cter in SUMO1); alternate. K592 participates in a covalent cross-link: Glycyl lysine isopeptide (Lys-Gly) (interchain with G-Cter in SUMO2); alternate. 2 positions are modified to phosphoserine: S594 and S622. K627 participates in a covalent cross-link: Glycyl lysine isopeptide (Lys-Gly) (interchain with G-Cter in SUMO2). Residues 645–713 are disordered; that stretch reads LDWAKPKGEG…KPQGKKTKFE (69 aa). K649 is subject to N6-acetyllysine. The span at 653 to 702 shows a compositional bias: gly residues; it reads EGGFGGRGGGRGGFGGRGGGRGGRGGFGGRGRGGFGGRGGFRGGRGGGGD. An asymmetric dimethylarginine mark is found at R659, R663, R669, R673, R676, R682, R684, R690, and R694. Position 697 is an asymmetric dimethylarginine; alternate (R697). R697 carries the post-translational modification Omega-N-methylarginine; alternate.

In terms of assembly, identified in a IGF2BP1-dependent mRNP granule complex containing untranslated mRNAs. Component of the SWAP complex that consists of NPM1, NCL/nucleolin, PARP1 and SWAP70. Component of a complex which is at least composed of HTATSF1/Tat-SF1, the P-TEFb complex components CDK9 and CCNT1, RNA polymerase II, SUPT5H, and NCL/nucleolin. Interacts with AICDA. Interacts with APTX. Interacts with C1QBP. Interacts with ERBB4. Interacts (via C-terminus) with FMR1 isoform 6 (via N-terminus). Interacts with GZF1; this interaction is important for nucleolar localization of GZF1. Interacts with NSUN2. Interacts with NVL. Interacts (via N-terminus domain) with SETX. Interacts (via RRM1 and C-terminal RRM4/Arg/Gly-rich domains) with TERT; the interaction is important for nucleolar localization of TERT. Interacts with WDR46. Interacts with ZFP36. Interacts with LRRC34. Interacts with RRP1B. Interacts with HNRNPU; this interaction occurs during mitosis. Interacts with RIOK1; RIOK1 recruits NCL to PRMT5 for symmetrically methylation. Interacts with ZBTB7B. Interacts with MDK; this interaction promotes NCL clustering and lateral movements of this complex into lipid rafts leading to MDK internalization. Interacts with HDGF. Interacts with ALKBH2. Interacts with IGFBP5; this interaction is necessary for IGFBP5 localization to the nucleus. Interacts with DDX24 (when ubiquitinated); this interaction may be important during ribosome biogenesis. Post-translationally, some glutamate residues are glycylated by TTLL8. This modification occurs exclusively on glutamate residues and results in a glycine chain on the gamma-carboxyl group. In terms of processing, symmetrically methylated by PRMT5.

It is found in the nucleus. Its subcellular location is the nucleolus. It localises to the cytoplasm. In terms of biological role, nucleolin is the major nucleolar protein of growing eukaryotic cells. It is found associated with intranucleolar chromatin and pre-ribosomal particles. It induces chromatin decondensation by binding to histone H1. It is thought to play a role in pre-rRNA transcription and ribosome assembly. May play a role in the process of transcriptional elongation. Binds RNA oligonucleotides with 5'-UUAGGG-3' repeats more tightly than the telomeric single-stranded DNA 5'-TTAGGG-3' repeats. This is Nucleolin (Ncl) from Rattus norvegicus (Rat).